A 540-amino-acid polypeptide reads, in one-letter code: Cobalt-factor III methyltransferase (540 aa).

4 residues coordinate [4Fe-4S] cluster: C402, C405, C439, and C443.

In the N-terminal section; belongs to the precorrin methyltransferase family. [4Fe-4S] cluster serves as cofactor.

It catalyses the reaction Co(II)-factor III + AH2 + S-adenosyl-L-methionine = Co-precorrin-4 + A + S-adenosyl-L-homocysteine. It participates in cofactor biosynthesis; adenosylcobalamin biosynthesis. Its function is as follows. Methyltransferase that catalyzes the reduction, ring contraction and methylation of C-17 in cobalt-factor III to form cobalt-precorrin-4. Is also able to convert cobalt-precorrin-3 to cobalt-precorrin-4. The protein is Cobalt-factor III methyltransferase (cbiH60) of Priestia megaterium (Bacillus megaterium).